A 589-amino-acid chain; its full sequence is Pentalenolactone D synthase (589 aa).

FAD is bound by residues 60 to 61, 82 to 83, 90 to 91, 102 to 103, Tyr108, Val152, and Met491; these read IG, DE, TW, and DV.

Belongs to the FAD-binding monooxygenase family. FAD serves as cofactor.

It catalyses the reaction 1-deoxy-11-oxopentalenate + NADPH + O2 + H(+) = pentalenolactone D + NADP(+) + H2O. It functions in the pathway antibiotic biosynthesis; pentalenolactone biosynthesis. Its function is as follows. Catalyzes the flavin-dependent Baeyer-Villiger oxidation of 1-deoxy-11-oxopentalenic acid to pentalenolactone D in the biosynthesis of pentalenolactone antibiotic. In Streptomyces arenae, this protein is Pentalenolactone D synthase (pntE).